Reading from the N-terminus, the 141-residue chain is Large ribosomal subunit protein bL17 (141 aa).

It belongs to the bacterial ribosomal protein bL17 family. In terms of assembly, part of the 50S ribosomal subunit. Contacts protein L32.

The sequence is that of Large ribosomal subunit protein bL17 from Sinorhizobium medicae (strain WSM419) (Ensifer medicae).